A 137-amino-acid polypeptide reads, in one-letter code: MKQRTLSIIKPDALKKKVVGKIIDRFESNGLEVIAMKRLHLSVKDAENFYAIHRERPFFKDLIEFMVSGPVVVMVLEGKDAVAKNRDLMGATDPKLAQKGTIRADFAESIDANAVHGSDSLENAHNEIAFFFATREF.

Positions 10, 58, 86, 92, 103, and 113 each coordinate ATP. H116 (pros-phosphohistidine intermediate) is an active-site residue.

This sequence belongs to the NDK family. Homotetramer. Mg(2+) serves as cofactor.

It localises to the cytoplasm. It carries out the reaction a 2'-deoxyribonucleoside 5'-diphosphate + ATP = a 2'-deoxyribonucleoside 5'-triphosphate + ADP. The enzyme catalyses a ribonucleoside 5'-diphosphate + ATP = a ribonucleoside 5'-triphosphate + ADP. Its function is as follows. Major role in the synthesis of nucleoside triphosphates other than ATP. The ATP gamma phosphate is transferred to the NDP beta phosphate via a ping-pong mechanism, using a phosphorylated active-site intermediate. In Helicobacter acinonychis (strain Sheeba), this protein is Nucleoside diphosphate kinase.